The primary structure comprises 184 residues: MAQRLKTFYLNSVVPKLRQQFHHRNIHEVPSIKKIVINRGLGDASQNAKLLDGSLQELTTIAGQRGVITRSKQAIAAFKIRQDMPVGISVTLRGERMYAFLDRLINLALPRIRDFQGMSTKSFDGQGNYSLGLNEQLMFPEINYDAIDQMRGMDISIITSATEDREGFALLQALGMPFRTATID.

Belongs to the universal ribosomal protein uL5 family. In terms of assembly, part of the 50S ribosomal subunit; contacts the 5S rRNA.

The protein localises to the plastid. It localises to the chloroplast. Binds 5S rRNA, forms part of the central protuberance of the 50S subunit. This chain is Large ribosomal subunit protein uL5c (rpl5), found in Nephroselmis olivacea (Green alga).